The primary structure comprises 256 residues: Imidazole glycerol phosphate synthase subunit HisF (256 aa).

Active-site residues include aspartate 11 and aspartate 130.

The protein belongs to the HisA/HisF family. In terms of assembly, heterodimer of HisH and HisF.

The protein localises to the cytoplasm. The catalysed reaction is 5-[(5-phospho-1-deoxy-D-ribulos-1-ylimino)methylamino]-1-(5-phospho-beta-D-ribosyl)imidazole-4-carboxamide + L-glutamine = D-erythro-1-(imidazol-4-yl)glycerol 3-phosphate + 5-amino-1-(5-phospho-beta-D-ribosyl)imidazole-4-carboxamide + L-glutamate + H(+). It participates in amino-acid biosynthesis; L-histidine biosynthesis; L-histidine from 5-phospho-alpha-D-ribose 1-diphosphate: step 5/9. IGPS catalyzes the conversion of PRFAR and glutamine to IGP, AICAR and glutamate. The HisF subunit catalyzes the cyclization activity that produces IGP and AICAR from PRFAR using the ammonia provided by the HisH subunit. The protein is Imidazole glycerol phosphate synthase subunit HisF of Prochlorococcus marinus (strain MIT 9215).